Consider the following 149-residue polypeptide: Calmodulin-2 (149 aa).

At Ala-2 the chain carries N-acetylalanine. EF-hand domains follow at residues 8-43, 44-79, 81-116, and 117-149; these read EQIA…LGQN, PTEA…KMKD, DSEE…LGEK, and LTDE…MMAK. The Ca(2+) site is built by Asp-21, Asp-23, Asp-25, Cys-27, Glu-32, Asp-57, Asp-59, Asn-61, Thr-63, Glu-68, Asp-94, Asp-96, Asn-98, and Glu-105. Lys-116 is modified (N6,N6,N6-trimethyllysine). Asp-130, Asp-132, Asp-134, Gln-136, and Glu-141 together coordinate Ca(2+).

This sequence belongs to the calmodulin family.

In terms of biological role, calmodulin mediates the control of a large number of enzymes, ion channels and other proteins by Ca(2+). Among the enzymes to be stimulated by the calmodulin-Ca(2+) complex are a number of protein kinases and phosphatases. The polypeptide is Calmodulin-2 (CAM2) (Oryza sativa subsp. indica (Rice)).